A 443-amino-acid polypeptide reads, in one-letter code: Large ribosomal subunit protein mL50 (443 aa).

The disordered stretch occupies residues 121 to 145; that stretch reads QPTRADAPEKIRDPNYEPATSGAGL. Over residues 126–135 the composition is skewed to basic and acidic residues; it reads DAPEKIRDPN.

The protein belongs to the mitochondrion-specific ribosomal protein mL50 family. As to quaternary structure, component of the mitochondrial large ribosomal subunit (mt-LSU). Mature N.crassa 74S mitochondrial ribosomes consist of a small (37S) and a large (54S) subunit. The 37S small subunit contains a 16S ribosomal RNA (16S mt-rRNA) and 32 different proteins. The 54S large subunit contains a 23S rRNA (23S mt-rRNA) and 42 different proteins.

It is found in the mitochondrion. Functionally, component of the mitochondrial ribosome (mitoribosome), a dedicated translation machinery responsible for the synthesis of mitochondrial genome-encoded proteins, including at least some of the essential transmembrane subunits of the mitochondrial respiratory chain. The mitoribosomes are attached to the mitochondrial inner membrane and translation products are cotranslationally integrated into the membrane. The polypeptide is Large ribosomal subunit protein mL50 (mrpl13) (Neurospora crassa (strain ATCC 24698 / 74-OR23-1A / CBS 708.71 / DSM 1257 / FGSC 987)).